A 100-amino-acid chain; its full sequence is Urease subunit gamma (100 aa).

Belongs to the urease gamma subunit family. In terms of assembly, heterotrimer of UreA (gamma), UreB (beta) and UreC (alpha) subunits. Three heterotrimers associate to form the active enzyme.

The protein resides in the cytoplasm. It catalyses the reaction urea + 2 H2O + H(+) = hydrogencarbonate + 2 NH4(+). The protein operates within nitrogen metabolism; urea degradation; CO(2) and NH(3) from urea (urease route): step 1/1. The protein is Urease subunit gamma of Corynebacterium glutamicum (strain R).